The chain runs to 201 residues: Dephospho-CoA kinase (201 aa).

The DPCK domain occupies 4 to 201 (SVGLTGNIAS…KYLREAKIKQ (198 aa)). 12 to 17 (ASGKST) provides a ligand contact to ATP.

It belongs to the CoaE family.

The protein localises to the cytoplasm. The catalysed reaction is 3'-dephospho-CoA + ATP = ADP + CoA + H(+). It functions in the pathway cofactor biosynthesis; coenzyme A biosynthesis; CoA from (R)-pantothenate: step 5/5. Functionally, catalyzes the phosphorylation of the 3'-hydroxyl group of dephosphocoenzyme A to form coenzyme A. The protein is Dephospho-CoA kinase of Legionella pneumophila (strain Paris).